Consider the following 158-residue polypeptide: Cyclic pyranopterin monophosphate synthase (158 aa).

Substrate contacts are provided by residues 75 to 77 (LCH) and 113 to 114 (ME). D128 is a catalytic residue.

Belongs to the MoaC family. As to quaternary structure, homohexamer; trimer of dimers.

The catalysed reaction is (8S)-3',8-cyclo-7,8-dihydroguanosine 5'-triphosphate = cyclic pyranopterin phosphate + diphosphate. It participates in cofactor biosynthesis; molybdopterin biosynthesis. In terms of biological role, catalyzes the conversion of (8S)-3',8-cyclo-7,8-dihydroguanosine 5'-triphosphate to cyclic pyranopterin monophosphate (cPMP). The polypeptide is Cyclic pyranopterin monophosphate synthase (Mannheimia succiniciproducens (strain KCTC 0769BP / MBEL55E)).